Reading from the N-terminus, the 250-residue chain is MPAGTVPTKDDVLVPETLLKKRKNADQIRAAKEAAAAEKKAANAEKDKVIFSRAEKYVKEYREAEREQIRLRREAKLNGTFYVPAEPKLVFVIRIKGISKMAPKPRKVLQLLRLHQINNGVFVRITKATAELLRIVEPYIAFGYPNLASVRQLVYKRGYGKVNKQRIPLSDNAIIEEALGKYGIICMEDLIHEIYTVGPAFKQASNFLWPFKLSNPSGGWGVRRKFKHYIEGGSTGNREENINALIKAQN.

Belongs to the universal ribosomal protein uL30 family.

This chain is Large ribosomal subunit protein uL30 (RPL7), found in Yarrowia lipolytica (strain CLIB 122 / E 150) (Yeast).